A 1175-amino-acid polypeptide reads, in one-letter code: Beta-agarase AgaO (1175 aa).

The signal sequence occupies residues M1–A29. The CBM6 1 domain maps to Y32–A164. The interval S169–S208 is disordered. A compositionally biased stretch (low complexity) spans T178–S200. The 129-residue stretch at F211 to E339 folds into the CBM6 2 domain. The segment at I355–A481 is disordered. The segment covering D382–D393 has biased composition (basic and acidic residues). The segment covering N471–A481 has biased composition (polar residues). E661 acts as the Proton donor in catalysis. Catalysis depends on E832, which acts as the Nucleophile.

It belongs to the glycosyl hydrolase 86 family.

The enzyme catalyses Hydrolysis of (1-&gt;4)-beta-D-galactosidic linkages in agarose, giving the tetramer as the predominant product.. Its activity is regulated as follows. Activity and stability are strongly enhanced by CaCl(2). Activity is not affected by sulfhydryl inhibitors such as iodoacetoamide and p-chloromercuribenzoate or by thiol reagents such as dithiothreitol and 2-mercaptoethanol. Strongly inhibited by N-bromosuccinimide and sodium dodecyl sulfate. Its function is as follows. Endo-type beta-agarase, which degrades agarose and agarose oligosaccharides more polymerized than hexamers to yield neoagarohexaose (NA6) as the main product, with lesser amounts of neoagarotetraose (NA4) and neoagarobiose (NA2). The sequence is that of Beta-agarase AgaO from Microbulbifer thermotolerans.